We begin with the raw amino-acid sequence, 1319 residues long: ERAD-associated E3 ubiquitin-protein ligase DOA10 (1319 aa).

Residue Met1 is modified to N-acetylmethionine. The Cytoplasmic segment spans residues Met1–Ala131. An RING-CH-type zinc finger spans residues Asp31–Lys100. Residues Cys39, Cys42, Cys56, Cys58, His66, Cys69, Cys90, and Cys93 each contribute to the Zn(2+) site. A helical membrane pass occupies residues Leu132 to Phe152. Over Gly153–Ser203 the chain is Lumenal. Residues Leu204 to Val224 form a helical membrane-spanning segment. At Arg225–Lys468 the chain is on the cytoplasmic side. Residues Ala291–Pro306 are compositionally biased toward low complexity. Disordered stretches follow at residues Ala291–Asn315 and Glu329–Tyr381. A helical membrane pass occupies residues Leu469–Ile489. Topologically, residues Ser490 to Tyr491 are lumenal. Residues Leu492–Ile512 traverse the membrane as a helical segment. Over Leu513–Val626 the chain is Cytoplasmic. Residues Phe627–Phe647 form a helical membrane-spanning segment. The Lumenal portion of the chain corresponds to Ser648–Met660. A helical membrane pass occupies residues Leu661–Ile681. Residues Gly682 to Met739 lie on the Cytoplasmic side of the membrane. Residues Phe740–Phe760 form a helical membrane-spanning segment. The Lumenal portion of the chain corresponds to Met761–Ser777. The helical transmembrane segment at Ile778–Leu797 threads the bilayer. At Glu798–Tyr965 the chain is on the cytoplasmic side. The chain crosses the membrane as a helical span at residues Met966 to Ile986. The Lumenal segment spans residues Ser987–Glu1019. A helical membrane pass occupies residues Leu1020–Leu1040. Over Ser1041–Asn1113 the chain is Cytoplasmic. The chain crosses the membrane as a helical span at residues Leu1114–Leu1134. Over Thr1135 to Ser1168 the chain is Lumenal. Residues Leu1169–Leu1189 traverse the membrane as a helical segment. The Cytoplasmic segment spans residues Lys1190 to Lys1213. Residues Gln1214–Leu1234 form a helical membrane-spanning segment. The Lumenal segment spans residues Arg1235 to Tyr1270. The chain crosses the membrane as a helical span at residues Phe1271–Ile1291. Over Gln1292 to Ser1319 the chain is Cytoplasmic.

Belongs to the DOA10/MARCH6 family. As to quaternary structure, component of the DOA10 ubiquitin ligase complex which contains E3 ligase SSM4/DOA10 and CDC48-binding protein UBX2/SEL1. The DOA10 complex interacts with the heterotrimeric CDC48-NPL4-UFD1 ATPase complex which is recruited by UBX2/SEL1 via its interaction with CDC48. Interacts with its associated ubiquitin conjugating enzymes UBC6 and UBC7 with its membrane anchor CUE1. Interacts with PEX29.

The protein resides in the endoplasmic reticulum membrane. It is found in the nucleus inner membrane. The catalysed reaction is S-ubiquitinyl-[E2 ubiquitin-conjugating enzyme]-L-cysteine + [acceptor protein]-L-lysine = [E2 ubiquitin-conjugating enzyme]-L-cysteine + N(6)-ubiquitinyl-[acceptor protein]-L-lysine.. The protein operates within protein modification; protein ubiquitination. E3 ubiquitin-protein ligase which accepts ubiquitin specifically from endoplasmic reticulum-associated UBC6 and UBC7 E2 ligases, and transfers it to substrates promoting their degradation. Mediates the degradation of a broad range of substrates, including endoplasmic reticulum membrane proteins (ERQC), soluble nuclear proteins and soluble cytoplasmic proteins (CytoQC). Component of the DOA10 ubiquitin ligase complex, which is part of the ERAD-C pathway responsible for the rapid degradation of membrane proteins with misfolded cytoplasmic domains. ERAD-C substrates are ubiquitinated through DOA10 in conjunction with the E2 ubiquitin-conjugating enzymes UBC6 and UBC7-CUE1. Ubiquitinated substrates are then removed to the cytosol via the action of the UFD1-NPL4-CDC48/p97 (UNC) AAA ATPase complex and targeted to the proteasome. Also recognizes the N-terminally acetylated residue of proteins as degradation signal (degron). N-terminally acetylated target proteins include MATALPHA2, TBF1, SLK19, YMR090W, HIS3, HSP104, UBP6 and ARO8. Catalyzes ubiquitination of mislocalized tail-anchored proteins that are extracted from the mitochondrion membrane by MSP1: following extraction, mistargeted proteins are transferred to the endoplasmic reticulum, where they are ubiquitinated by DOA10 and degraded by the proteasome. The polypeptide is ERAD-associated E3 ubiquitin-protein ligase DOA10 (SSM4) (Saccharomyces cerevisiae (strain ATCC 204508 / S288c) (Baker's yeast)).